The chain runs to 435 residues: Legumain (435 aa).

The N-terminal stretch at 1–17 is a signal peptide; sequence MTWRVAVLLSLVLGAGA. Asn93 is a glycosylation site (N-linked (GlcNAc...) asparagine). His150 is a catalytic residue. Asn169 carries N-linked (GlcNAc...) asparagine glycosylation. The Nucleophile role is filled by Cys191. Residues Asn265 and Asn274 are each glycosylated (N-linked (GlcNAc...) asparagine). A propeptide spanning residues 326-435 is cleaved from the precursor; that stretch reads DVKESQNLIG…AMDKVCLSHY (110 aa). Disulfide bonds link Cys380–Cys414 and Cys392–Cys431.

Belongs to the peptidase C13 family. In terms of assembly, homodimer before autocatalytic removal of the propeptide. Monomer after autocatalytic processing. May interact with integrins. In terms of processing, glycosylated. Post-translationally, activated by autocatalytic processing at pH 4. As to expression, detected in kidney proximal tubules (at protein level). Ubiquitous. Particularly abundant in kidney and placenta.

It is found in the lysosome. It carries out the reaction Hydrolysis of proteins and small molecule substrates at -Asn-|-Xaa- bonds.. Inhibited by cystatin-C. Its function is as follows. Has a strict specificity for hydrolysis of asparaginyl bonds. Can also cleave aspartyl bonds slowly, especially under acidic conditions. Involved in the processing of proteins for MHC class II antigen presentation in the lysosomal/endosomal system. Also involved in MHC class I antigen presentation in cross-presenting dendritic cells by mediating cleavage and maturation of Perforin-2 (MPEG1), thereby promoting antigen translocation in the cytosol. Required for normal lysosomal protein degradation in renal proximal tubules. Required for normal degradation of internalized EGFR. Plays a role in the regulation of cell proliferation via its role in EGFR degradation. The sequence is that of Legumain (Lgmn) from Mus musculus (Mouse).